The chain runs to 413 residues: Zeaxanthin glucosyltransferase (413 aa).

Belongs to the UDP-glycosyltransferase family.

The enzyme catalyses all-trans-zeaxanthin + 2 UDP-alpha-D-glucose = zeaxanthin bis(beta-D-glucoside) + 2 UDP + 2 H(+). The protein operates within carotenoid biosynthesis; zeaxanthin diglucoside biosynthesis. Functionally, catalyzes the glycosylation reaction which converts zeaxanthin to zeaxanthin bis(beta-D-glucoside). The reaction proceeds in two steps with the monoglucoside as an intermediate. The protein is Zeaxanthin glucosyltransferase (crtX) of Pseudescherichia vulneris (Escherichia vulneris).